Reading from the N-terminus, the 364-residue chain is Apyrase (364 aa).

Positions 1–35 (MRSSYRVGNPIRFQPTNVVGLLLLSLVLSFMLVQS) are cleaved as a signal peptide.

It belongs to the apyrase family. Requires Ca(2+) as cofactor. In terms of tissue distribution, salivary gland (at protein level).

Its subcellular location is the secreted. The catalysed reaction is a ribonucleoside 5'-triphosphate + 2 H2O = a ribonucleoside 5'-phosphate + 2 phosphate + 2 H(+). Facilitates hematophagy by inhibiting ADP-dependent platelet aggregation in the host. Cleaves adenosine triphosphate (ATP) and adenosine diphosphate (ADP) to adenosine monophosphate (AMP) and inorganic phosphate in calcium-dependent manner. The sequence is that of Apyrase from Cimex lectularius (Bed bug).